The following is a 761-amino-acid chain: Semaphorin-3D (761 aa).

The first 24 residues, 1–24 (MRASQVPNACSLLSLAMLFFPVTG), serve as a signal peptide directing secretion. In terms of domain architecture, Sema spans 32-519 (RLKLSYKDLL…SRDGLVQLSL (488 aa)). Cysteines 105 and 116 form a disulfide. N127 carries an N-linked (GlcNAc...) asparagine glycan. 4 cysteine pairs are disulfide-bonded: C134–C143, C274–C386, C298–C346, and C522–C540. The Ig-like C2-type domain occupies 552–670 (PTSKRRARRQ…IHTIVKLNLN (119 aa)). The N-linked (GlcNAc...) asparagine glycan is linked to N595. C653 and C719 are joined by a disulfide. Residues 728 to 754 (RRQRNKGGAKWKHVQEMKKKRNRRHHE) show a composition bias toward basic residues. The interval 728–761 (RRQRNKGGAKWKHVQEMKKKRNRRHHEPARPPST) is disordered.

Belongs to the semaphorin family. In terms of tissue distribution, developing spinal cord and developing visual system. Collapsin-1, -2, -3, and -5 bind to overlapping but distinct axon tracts.

The protein localises to the secreted. Functionally, induces the collapse and paralysis of neuronal growth cones. Could potentially act as repulsive cues toward specific neuronal populations. Binds to neuropilin. The chain is Semaphorin-3D (SEMA3D) from Gallus gallus (Chicken).